The sequence spans 447 residues: Phosphoglucosamine mutase (447 aa).

The active-site Phosphoserine intermediate is the Ser102. Mg(2+)-binding residues include Ser102, Asp241, Asp243, and Asp245. Ser102 bears the Phosphoserine mark.

Belongs to the phosphohexose mutase family. Mg(2+) is required as a cofactor. In terms of processing, activated by phosphorylation.

It carries out the reaction alpha-D-glucosamine 1-phosphate = D-glucosamine 6-phosphate. In terms of biological role, catalyzes the conversion of glucosamine-6-phosphate to glucosamine-1-phosphate. This chain is Phosphoglucosamine mutase, found in Symbiobacterium thermophilum (strain DSM 24528 / JCM 14929 / IAM 14863 / T).